The sequence spans 272 residues: NADH-dependent L-xylulose reductase (272 aa).

L24 and D78 together coordinate NADP(+). The active-site Proton donor is S160. Residues Y175, K179, and I208 each coordinate NADP(+). Catalysis depends on Y175, which acts as the Proton acceptor. The active-site Lowers pKa of active site Tyr is K179.

This sequence belongs to the short-chain dehydrogenases/reductases (SDR) family.

It carries out the reaction xylitol + NAD(+) = L-xylulose + NADH + H(+). It catalyses the reaction D-arabinitol + NAD(+) = D-ribulose + NADH + H(+). Its function is as follows. NADH-dependent L-xylulose reductase; part of the yeast pathway for L-arabinose catabolism. Reversibly converts L-xylulose to xylitol and D-ribulose to D-arabinitol. It has a much lower activity with D-xylulose. Sugar alcohols can serve as a substrate when the hydroxyl group of C-2 is in the L- and the hydroxyl group of the C-3 is in the D-configuration. Also seems to be specific for sugar alcohols that have not more than 5 carbons since no activity is observed with dulcitol (galactitol), which has the hydroxyl group of C-2 in L- and of C-3 in D-configuration, but is a six-carbon sugar alcohol. The chain is NADH-dependent L-xylulose reductase from Ambrosiozyma monospora (Yeast).